The following is a 312-amino-acid chain: Taste receptor type 2 member 9 (312 aa).

The Extracellular portion of the chain corresponds to 1 to 9; the sequence is MPSAIEAIY. A helical transmembrane segment spans residues 10–32; it reads IILIAGELTIGIWGNGFIVLVNC. The Cytoplasmic segment spans residues 33–52; the sequence is XDWLKRRDISLIDIILISLA. The chain crosses the membrane as a helical span at residues 53-72; it reads ISRICLLCVISLDGFFMLLF. Residues 73–86 are Extracellular-facing; that stretch reads PGTYGNSVLVSIVN. Residues 87-109 form a helical membrane-spanning segment; it reads VVWTFANNSSLWFTSCLSIFYLL. At 110–128 the chain is on the cytoplasmic side; that stretch reads KIANISHPFFFWLKLKINK. Residues 129–146 traverse the membrane as a helical segment; that stretch reads VMLAILLGSFLISLIISV. Residues 147 to 180 are Extracellular-facing; it reads XKNDDMWYHLFKVSXEENITWEFKVSKIPGTFKQ. Residue asparagine 164 is glycosylated (N-linked (GlcNAc...) asparagine). The helical transmembrane segment at 181–203 threads the bilayer; the sequence is LTLNLGGRVPFILCLISFFLLLF. The Cytoplasmic segment spans residues 204–234; the sequence is SLVRHTKQIQLHATGFRDPSTEAHMRAIKAV. Residues 235–257 traverse the membrane as a helical segment; the sequence is IIFLLLLIVYYPVFLVMTSSALI. The Extracellular portion of the chain corresponds to 258–261; sequence PQGK. Residues 262-284 form a helical membrane-spanning segment; sequence LVLMIGDIVTVIFPSSHSFILIM. Residues 285-312 are Cytoplasmic-facing; that stretch reads GNSKLREAFLKMLRFVKGFLRRRKPFVP.

Belongs to the G-protein coupled receptor T2R family.

The protein resides in the membrane. In terms of biological role, gustducin-coupled receptor implicated in the perception of bitter compounds in the oral cavity and the gastrointestinal tract. Signals through PLCB2 and the calcium-regulated cation channel TRPM5. The protein is Taste receptor type 2 member 9 (TAS2R9) of Pan troglodytes (Chimpanzee).